The sequence spans 3916 residues: MAGNQYLPKEPIAIIGTSCRFPGGANTPSKLWDLLCEKRDVQSRIPNDRFNVDAFYSTNGDKNGCTDVKNAYVLSEDIRVFDASFFKINPREAEAMDPQQRLLLEAVYEATEAAGLPMEDLKGSDTAVYVGCMTGDYHEMLMRDPQDMPKYMATGTARSILSNRISYLFDWKGPSMTIDTACSSSLVAVYDAVTALRNGVSKIACAGGANLILGPEMMISESKLHMLSPTGRSRMWDASANGYARGEGVAAIMMKTLSQALADGDHIQGVIREIGVNSDGRTNGITLPSPEAQKVLIRQTYKKAGLDFFKDRCQFFEAHGTGTPAGDPLEARAIHEAFFTDGDTVPEPMYVGSVKTAIGHLEGCAGLAGLIKALEAVKRGIIPPNQLFENLNPALKPYVSNLRLPTESKPWPKLTPGSPRRASVNSFGFGGTNVHAIIEQFDNVHTQTSSSDGIISTPLVLSANSDLSLRKQIAHFAEAIEHNDKGKIDRVIFTLTQRRSQLPLRTYFSGYDLQSLQQKLRDATAENAVLPFISQTVPPGRPPRILGVFTGQGAQWPTMGREILKASPFARAVIASLEESLASLAQPPAWTLTEQIMADKESSRLSEAAISQPLCTAVQIMVVELLRKAGITFNCVIGHSSGEITAAYTAGFLSASDAIRVAYLRGVCAKLAGGENGETGSMIAVGLSYEEASAFCEENFAGLVDVAASNAPTSTTLSGDKASIDDAKALLDAQGTFARILKVDTAYHSHHMNPCAQPYLDKLQAARVKSLPGDESVEWYSSVLGERITASLHGEALCDEYWVENMVNPVLFSVASELVAEASLPCHVALEVGPHPALKGPFNQTYKRATGSPLPYQGTVARNIHDVEGLSDSLGFLWSHLGKSAVDFTAYSQAFSPSITAMADGLPPYAWDHTQSFWRESRKSLNYRQRTQPPHPLLGARSVEDTADSMRWINYLRLDDVPWLEGHKVEGQVVYPAAGYLVMAMEAARAIDTTKGIQLIELSDVYILSAIQLTEGSQALETVFTLQVERNEPTFSTASWTLSTPMSGRNDSWKCNAKGQLRVEFGCSDDAARLPSRNKPIASLTSVNMERFYSALANIGLEYTGEFKQLKSIDRQLGLATAHVSQVVPDFPAMIHPALLDGAFQSIFAAYCWPDDGSLQAPFVPTFFRSLRIANTGHLRHGEDLVVDSFLTNTNERELTADMDVFQSSQGQPVLQLQGLTCTSLLRPGPSNAKELYTKTEWEVDIASGIAQSDTQDQDTASDLELVDLCERLSYFYLRELNNAVGREEVSGFDWHYRRIFEWIDHLFPLIQSGQHATIKTEWSSDSRDWLMQQSARFPGRIDLQLIQAVGENLPSVVRKQTTMLEHMVKDDMLNRIYKFGLGFERANVYLGRISKQIAHRYPRMNILEIGAGTGGATKGIMESLGTTFETYTFTDISTGFFEAAAEAFDHWADKMIFKPLNIESDPTEQGFPEGHYDFIIASNVLHATKSLTVTMRNTRKLLKPGGQLLLLEVTSDIVRVKLMMSGLSGWWLGGDDGRRYGPTIPVSQWDALLKQTGFSGVDKTVNDFVDAEKYMTSVMLSQAVDDRIELLRQPRLTFSDWLSSQSITVVGGYFRDIGRDILEILHQMNHGASQPVIHHVGSFEELALSNIQARSALVLEDLDEPILKDLTDDKLRGVQRLINESRQVLWVSKGCQRDEPFANMSIGMCRSLASEYPHIHLQHVDIEGRVSPMTASLLVEAFLRLVYRASLKSDDLVWSIEAELVLREDKWFIPRVKSDEALNNQLNASKMTIHSQKTLHGDTIEIQQRSNQFVIVDPVPCVPVSVSSPPVAITVTHSLLFPFQVGTKSSGYLCYGYTDSQPRTRVLAISEVNRSKVSVSPFSVWDLSSSEIDAADLLRKTALAITADRLLSDFEAGATVLIHESDELLGAALQWKAAELDLNVIMTTSESSRERSTGAMFIHALAPERLVNHIMPQHTKAVIDLSGKDYSIVGSPLRRCLPANCKFHQLQDILGNASQGVADPIIHGVRDASRSSLQLCGDGPVVKLSDLPSLRASIKDYATVVEFSANTTIPAIVQPLEGSRLFRSDRTYLLIGCTGGLGKALCRWMVSCGVRHLALTTRNVAAIDQVWLEELRIQGAQVNLYQADVSDKAALLQAYDQIVKEMPPICGTANAALLLSDRTFTELKVNDFTKVFGPKVKGTQNLHELLLDQKLDFFIMFSSLASVVGNRGQANYAASNLFMSAIAEQRRAKGLAASVMHIGMVLGVGYVSSTGAYEATLRSSNYMAISETDLLNMFSQAILVGQPNSTHAPELITGLNRFSLEPEAQKYFWRDNMRFCHHTLEEEHQERASATKVSISQRLSEAKGTAEILAVVEEEFCTKLERLLQAEAGFVKTSQSLLGLGVDSLVAAEIRSWFLKELEVDTPVLEILNTASITELCSTVVSHLPTISGEIAPKTEVTKQAIKTLNVVETSTAVSSALPTENEPFTIRNSPNSTQVTSEAGVDEDTSIHSKFDRAGPLSFAQERLWFLQQFLRDHSTYNVTMHYHISGPLRLHDLEMAFQQLIHRHESLRTSFFIDPDTDLPTQAVLKDSSFKLEQKHNSTAKIEYKAMQEMSYDLENGKVTKAVILPDSDGEFDLIFGFHHIALDGYSAQIMVRDLAIAYAGQTLPSKQQDYLDFAIAQKTAKVPDTTLAYWRSEFRELPPTLSVFDFAETKTRTPLTDYTTRALERTISIDQGRSIKAVAKCLDATPFHIHLAALQVVLSDLASTKDLCIGITDANKYDVTHIDTVGFFVNLLPLRLKISLSQTLAEVVANAKSKANSALSHSDIPFDVLLDEVKLPRSTTHSPLFQVILNYKMGSTQKVPLADCQAQLVAFKDASNPYDLTFDIETYHDGSACISVKTQEYLYSESELSFILDSYLQTLALFASEPSRTIDQICRPTAEQIDKALTLGRGERIPSPRLETLCHYFEEFVVKQPDDTALVTDKGQALTWCQLKALVNQIAMTFVEAGAKQDSRVGVYCEPSMYILPTLLAIAEVGGVYVPLDAQNPIKRLQLMVDDCQPDVILIDDSTATTARELETNAIVINVNTIKADPSNTFHMDIRARGNGMGYIFYTSGTTGVPKAVALTHTSLVHHFDGFIHYNNLSKCRMLQQAPLGFDMSLTQMTLAIMLGGTLIVASSETRKDPMQLAQLMLAEKVTHTFMTPTLALSVIHHGYEYLRQCVNWEHASLAGEAMTTRVTREFKRLGLRNLELLNGYGPTEITIIATCGSNELGDTLRDTHNPSIGRALPNYSCYILDENMQPVRPGLAGELVIGGAGVAIGYLNRQDLTEVKFLRDPFSPAEDIARGWTRMYRTGDKARFLSDGRLCFLGRIAGDSQIKLRGFRIELEDIASTIVRASDGKIPEAAVSLRGEGDSAYLVAFVILSQFNSPSDENGYLKQLLEELSLPRYMKPARIISIDQLPMNASGKLDQYALDALPVPHEEDIVDKPLTETQERLKLGWLKALPFIDAAIGPDTDFFSAGGNSLRIVSLREYITREFGVTVSVFDLFQASTLGEMAAKIDGSTTQGPTTMPIDWNEETRIDADLSIVGAQEPLPSETANDLQVALTGATGFLGVSILKTLLEDKRVSKVHCLAVRSSSNTSDPVFSSSRVACYPGDLSLPRLGLSQEQFDQLAKTVERIIHNGADVSFLKTYQSLKRSNVSSSRELARMAITRRIPVHFVSTGGVVQLTGQDGLDEVSVADSVPPTDGSLGYVASKWASEVILEKYASQYNLPVWIHRPSNITGPNAPKADLMQNIFHYSVKTASLPDLASWSGCFDFVPVDVVAAGIAGSIYETQDTVAYKHHCGREKISVEDLPSYLEAKHGKIETISVEEWLERSKAAGFDEVTAALVEKTLSRGGIVPWLRKEAN.

One can recognise a Ketosynthase family 3 (KS3) domain in the interval K9–Q440. Catalysis depends on for beta-ketoacyl synthase activity residues C182, H319, and H360. Positions V548 to D866 are malonyl-CoA:ACP transacylase (MAT) domain. The N-terminal hotdog fold stretch occupies residues H935–S1068. The interval H935–P1228 is dehydratase (DH) domain. The 297-residue stretch at H935–S1231 folds into the PKS/mFAS DH domain. H967 (proton acceptor; for dehydratase activity) is an active-site residue. Residues L1084 to S1231 are C-terminal hotdog fold. D1141 serves as the catalytic Proton donor; for dehydratase activity. The interval I1347–Y1575 is C-methyltransferase (CMeT) domain. Residues T2092 to V2266 are ketoreductase (KR) domain 1. In terms of domain architecture, Carrier 1 spans E2372–L2449. An O-(pantetheine 4'-phosphoryl)serine modification is found at S2409. The segment at N2487 to D2510 is disordered. Polar residues predominate over residues I2492–S2503. Residues P2522–I2806 form a condensation region. The adenylation stretch occupies residues E2975–L3385. In terms of domain architecture, Carrier 2 spans K3493–T3570. S3530 is modified (O-(pantetheine 4'-phosphoryl)serine). The segment at L3612–A3833 is thiolester reductase (R) domain.

It in the C-terminal section; belongs to the NRP synthetase family.

Its pathway is mycotoxin biosynthesis. Functionally, fusarin C synthetase; part of the gene cluster that mediates the biosynthesis of the mycotoxin fusarin C. Within the cluster, FUS1, FUS2, FUS8 and FUS9 are sufficient for fusarin production. The roles of the other FUS members are yet undetermined. The fusarin C synthetase FUS1 is responsible for the condensation of one acetyl-coenzyme A (CoA) unit with six malonyl-CoA units and the amide linkage of the arising heptaketide and homoserine, subsequently releasing the first intermediate, prefusarin, as an alcohol with an open ring structure. The cytochrome P450 monooxygenase FUS8 participates in multiple oxidation processes at carbon C-20 and is able to use the FUS1 product as substrate, resulting in formation of 20-hydroxy-prefusarin. This reaction seems to be essential before the 2-pyrrolidone ring closure can be catalyzed by FUS2, generating 20-hydroxy-fusarin. FUS8 is able to further oxidizes carbon C-20 after ring closure, resulting in the formation of carboxy-fusarin C. As the last step, FUS9 methylates the hydroxyl group at C-21 to generate fusarin C. Fusarin C can then rearrange to epi-fusarin C, the (z)-isomers, and fusarin A and fusarin D. The protein is Fusarin C synthetase of Gibberella fujikuroi (strain CBS 195.34 / IMI 58289 / NRRL A-6831) (Bakanae and foot rot disease fungus).